Consider the following 373-residue polypeptide: 3-isopropylmalate dehydrogenase (373 aa).

Position 82 to 93 (82 to 93 (GPKWGTGTVRPE)) interacts with NAD(+). Substrate is bound by residues R100, R110, R139, and D231. Positions 231, 256, and 260 each coordinate Mg(2+). 295–306 (GSAPDLPANKVN) is an NAD(+) binding site.

It belongs to the isocitrate and isopropylmalate dehydrogenases family. Homodimer. The cofactor is Mg(2+). Requires Mn(2+) as cofactor.

It is found in the cytoplasm. It catalyses the reaction (2R,3S)-3-isopropylmalate + NAD(+) = 4-methyl-2-oxopentanoate + CO2 + NADH. Its pathway is amino-acid biosynthesis; L-leucine biosynthesis; L-leucine from 3-methyl-2-oxobutanoate: step 3/4. Its function is as follows. Catalyzes the oxidation of 3-carboxy-2-hydroxy-4-methylpentanoate (3-isopropylmalate) to 3-carboxy-4-methyl-2-oxopentanoate. The product decarboxylates to 4-methyl-2 oxopentanoate. The polypeptide is 3-isopropylmalate dehydrogenase (LEU2) (Candida albicans (Yeast)).